The chain runs to 439 residues: MDPLSELQDDLTLDDTSQALNQLKLASIDEKNWPSDEMPDFPKSDDSKSSSPEPVTHLKWDDPYYDIARHQIVEVAGDDKYGRKIIVFSACRMPPSHQLDHSKLLGYLKHTLDQYVESDYTLLYLHHGLTSDNKPSLSWLRDAYREFDRKYKKNIKALYIVHPTMFIKTLLILFKPLISFKFGRKIFYVNYLSELSEHVKLEQLGIPRQVLKYDDFLKSTQKSPATAPKPMPPRPPLPNQQFGVSLQHLQEKSPGQDPIPIVLRETVAYLQAHALTTEGIFRRSANTQVVREVQQKYNMGLPVDFDQYNELHLPAVILKTFLRELPEPLLTFDLYPHVVGFLNIDESQRVEVTQQVLQTLPEENYQVLHFLTAFLVQISAHCDQNKMTNTNLAVVFGPNLLWAKDAAITLKAINPINTFTKFLLDHQGELFPSTDAQGV.

Met-1 carries the N-acetylmethionine modification. Basic and acidic residues predominate over residues 28–48 (IDEKNWPSDEMPDFPKSDDSK). Residues 28–55 (IDEKNWPSDEMPDFPKSDDSKSSSPEPV) are disordered. Residues Ser-44, Ser-47, Ser-50, and Ser-51 each carry the phosphoserine modification. Residues 63–218 (PYYDIARHQI…QVLKYDDFLK (156 aa)) enclose the CRAL-TRIO domain. Tyr-65 bears the Phosphotyrosine mark. N6-acetyllysine is present on Lys-80. The short motif at 228 to 238 (PKPMPPRPPLP) is the SH3-binding element. In terms of domain architecture, Rho-GAP spans 244-431 (VSLQHLQEKS…FLLDHQGELF (188 aa)).

As to quaternary structure, found in a complex with XPO7, EIF4A1, ARHGAP1, VPS26A, VPS29, VPS35 and SFN. Interacts with BNIPL.

Its subcellular location is the cytoplasm. Its function is as follows. GTPase activator for the Rho, Rac and Cdc42 proteins, converting them to the putatively inactive GDP-bound state. Cdc42 seems to be the preferred substrate. This is Rho GTPase-activating protein 1 (Arhgap1) from Mus musculus (Mouse).